The chain runs to 1070 residues: DNA double-strand break repair Rad50 ATPase (1070 aa).

ATP is bound by residues arginine 12, 32–38, and glutamine 142; that span reads NGSGKSS. 3 coiled-coil regions span residues 227–257, 369–403, and 449–478; these read LEEL…RLQE, ECRT…EKAG, and LREL…KEIR. In terms of domain architecture, Zinc-hook spans 508-607; sequence LENLEDFNEL…KLNRLKEAKK (100 aa). Cysteine 555 and cysteine 558 together coordinate Zn(2+). Coiled-coil stretches lie at residues 570 to 614 and 878 to 908; these read TAEE…QAYD and LKRL…ADEL. 969 to 974 is an ATP binding site; sequence LLSGGE.

The protein belongs to the SMC family. RAD50 subfamily. In terms of assembly, homodimer. Forms a heterotetramer composed of two Mre11 subunits and two Rad50 subunits. It depends on Zn(2+) as a cofactor.

In terms of biological role, part of the Rad50/Mre11 complex, which is involved in the early steps of DNA double-strand break (DSB) repair. The complex may facilitate opening of the processed DNA ends to aid in the recruitment of HerA and NurA. Rad50 controls the balance between DNA end bridging and DNA resection via ATP-dependent structural rearrangements of the Rad50/Mre11 complex. The chain is DNA double-strand break repair Rad50 ATPase from Methanosarcina mazei (strain ATCC BAA-159 / DSM 3647 / Goe1 / Go1 / JCM 11833 / OCM 88) (Methanosarcina frisia).